We begin with the raw amino-acid sequence, 174 residues long: Large ribosomal subunit protein uL15 (174 aa).

2 disordered regions span residues 1 to 56 (MKLH…GQMR) and 150 to 174 (VERR…TPGA). Positions 21 to 35 (RGIGSGKGKTGGKGM) are enriched in gly residues.

The protein belongs to the universal ribosomal protein uL15 family. Part of the 50S ribosomal subunit.

Functionally, binds to the 23S rRNA. This chain is Large ribosomal subunit protein uL15, found in Roseiflexus castenholzii (strain DSM 13941 / HLO8).